Here is a 355-residue protein sequence, read N- to C-terminus: Blue-sensitive opsin P467 (355 aa).

The Extracellular portion of the chain corresponds to 1 to 36 (MNGTEGINFYVPLSNKTGLVRSPFEYPQYYLADPWK). Residues N2 and N15 are each glycosylated (N-linked (GlcNAc...) asparagine). Residues 37-61 (FKVLSFYMFFLIAAGMPLNGLTLFV) form a helical membrane-spanning segment. Topologically, residues 62–73 (TFQHKKLRQPLN) are cytoplasmic. Residues 74 to 98 (YILVNLAAANLVTVCCGFTVTFYAS) form a helical membrane-spanning segment. The Extracellular portion of the chain corresponds to 99–113 (WYAYFVFGPIGCAIE). C110 and C187 are oxidised to a cystine. Residues 114–133 (GFFATIGGQVALWSLVVLAI) form a helical membrane-spanning segment. Residues 134-152 (ERYIVICKPMGNFRFSATH) lie on the Cytoplasmic side of the membrane. The chain crosses the membrane as a helical span at residues 153–176 (AIMGIAFTWFMALACAGPPLFGWS). Residues 177–202 (RFIPEGMQCSCGPDYYTLNPDFHNES) are Extracellular-facing. N-linked (GlcNAc...) asparagine glycosylation is present at N200. The helical transmembrane segment at 203–230 (YVIYMFIVHFTVPMVVIFFSYGRLVCKV) threads the bilayer. Topologically, residues 231 to 252 (REAAAQQQESATTQKAEKEVTR) are cytoplasmic. The chain crosses the membrane as a helical span at residues 253–276 (MVILMVLGFLLAWTPYAATAIWIF). Topologically, residues 277-284 (TNRGAAFS) are extracellular. The helical transmembrane segment at 285–309 (VTFMTIPAFFSKSSSIYNPIIYVLL) threads the bilayer. The residue at position 296 (K296) is an N6-(retinylidene)lysine. Over 310 to 355 (NKQFRNCMVTTICCGKNPFGDEDVSSSVSQSKTEVSSVSSSQVAPA) the chain is Cytoplasmic. Residues 333 to 355 (VSSSVSQSKTEVSSVSSSQVAPA) are disordered. A compositionally biased stretch (low complexity) spans 334-355 (SSSVSQSKTEVSSVSSSQVAPA).

The protein belongs to the G-protein coupled receptor 1 family. Opsin subfamily. In terms of processing, phosphorylated on some or all of the serine and threonine residues present in the C-terminal region. In terms of tissue distribution, in this lizard the color pigments are found in the rod-shaped photoreceptor cells which have been derived from ancestral cone-like photoreceptors.

Its subcellular location is the membrane. Functionally, visual pigments are the light-absorbing molecules that mediate vision. They consist of an apoprotein, opsin, covalently linked to cis-retinal. This is Blue-sensitive opsin P467 from Gekko gecko (Tokay gecko).